We begin with the raw amino-acid sequence, 511 residues long: Synaptotagmin-6 (511 aa).

Residues 1–59 (MSGVWGAGGPRCQAALAVLASLCRARPPPLGLDVETCRSFELQSPEQSPSAADSGTSVS) lie on the Vesicular side of the membrane. The cysteine motif stretch occupies residues 12 to 38 (CQAALAVLASLCRARPPPLGLDVETCR). Residues 60 to 80 (LLAVVVIVCGVALVAVFLFLF) traverse the membrane as a helical segment. Residues 81-511 (WKLCWMPWRK…KSFKEGTPRL (431 aa)) are Cytoplasmic-facing. 2 disordered regions span residues 92–119 (EASS…ADKL) and 157–182 (TKLQ…LPRQ). Over residues 94–103 (SSPSSANPAS) the composition is skewed to low complexity. Polar residues-rich tracts occupy residues 104-113 (ETLQSPSSRG) and 160-172 (QRQT…STRH). Serine 217 carries the phosphoserine modification. 2 consecutive C2 domains span residues 230 to 351 (SCGK…SIWK) and 362 to 495 (DLGE…AHWH). The Ca(2+) site is built by aspartate 261, aspartate 267, aspartate 319, phenylalanine 320, aspartate 321, serine 324, aspartate 327, aspartate 393, aspartate 399, aspartate 453, and aspartate 455. Positions 483–511 (MLAYPRKPIAHWHSLVEVKKSFKEGTPRL) are necessary for cell membrane association (isoform 2).

This sequence belongs to the synaptotagmin family. As to quaternary structure, isoform 1: Homodimer; disulfide-linked via the cysteine motif. Isoform 1: Can also form heterodimers with SYT3, SYT7, SYT9 and SYT10. Isoform 1: Interacts with STX1A, STX1B and STX2; the interaction is Ca(2+)-dependent. Isoform 2: Is not able to form homodimer and heterodimers. It depends on Ca(2+) as a cofactor. As to expression, isoform 1 is expressed in the olfactory bulb. Isoform 2 is expressed in the brain (at protein level).

It is found in the cytoplasmic vesicle. It localises to the secretory vesicle. The protein localises to the synaptic vesicle membrane. The protein resides in the membrane. Its subcellular location is the cytoplasm. It is found in the cytosol. It localises to the cell membrane. In terms of biological role, may be involved in Ca(2+)-dependent exocytosis of secretory vesicles through Ca(2+) and phospholipid binding to the C2 domain or may serve as Ca(2+) sensors in the process of vesicular trafficking and exocytosis. May mediate Ca(2+)-regulation of exocytosis in acrosomal reaction in sperm. The protein is Synaptotagmin-6 (Syt6) of Mus musculus (Mouse).